The following is a 141-amino-acid chain: Large ribosomal subunit protein uL11 (141 aa).

The protein belongs to the universal ribosomal protein uL11 family. Part of the ribosomal stalk of the 50S ribosomal subunit. Interacts with L10 and the large rRNA to form the base of the stalk. L10 forms an elongated spine to which L12 dimers bind in a sequential fashion forming a multimeric L10(L12)X complex. Post-translationally, one or more lysine residues are methylated.

Functionally, forms part of the ribosomal stalk which helps the ribosome interact with GTP-bound translation factors. The chain is Large ribosomal subunit protein uL11 from Selenomonas ruminantium.